Here is a 277-residue protein sequence, read N- to C-terminus: MALKTFNPTTPGQRQLVMVDRSALYKGKPVKALTEGKLSSGGRNNTGRITVRFLGGGHKQSYRMVDFKRDKVDVPATVERLEYDPNRTAFIALVKYQDGELAYILAPQRLAVGDTIVAGNYVDVKPGNVMPLGNMPVGTIVHNIEVKIGKGGQLARSAGTYAQIVGRDQDYVIVRLNSGEQRLVHGRCRGTIGAVSNPDHMNTSIGKAGRKRWMGRRPHNRGVAMNPIDHPHGGGEGRTSGGRHPVTPWGKPTKGKKTRTNKSTDKFILLSRHKRKK.

The interval 222–265 (GVAMNPIDHPHGGGEGRTSGGRHPVTPWGKPTKGKKTRTNKSTD) is disordered.

This sequence belongs to the universal ribosomal protein uL2 family. As to quaternary structure, part of the 50S ribosomal subunit. Forms a bridge to the 30S subunit in the 70S ribosome.

Its function is as follows. One of the primary rRNA binding proteins. Required for association of the 30S and 50S subunits to form the 70S ribosome, for tRNA binding and peptide bond formation. It has been suggested to have peptidyltransferase activity; this is somewhat controversial. Makes several contacts with the 16S rRNA in the 70S ribosome. This Bradyrhizobium sp. (strain BTAi1 / ATCC BAA-1182) protein is Large ribosomal subunit protein uL2.